Reading from the N-terminus, the 129-residue chain is Acyl carrier protein 2, chloroplastic (129 aa).

The transit peptide at 1–49 directs the protein to the chloroplast; the sequence is MASAAASAVSFARPVKAICVNSVSFSALRKDNVSFRLQPVPQRFSVCCA. Residues 52-127 form the Carrier domain; that stretch reads KETVEKVCDI…DAANLIDSLV (76 aa). Ser-87 is subject to O-(pantetheine 4'-phosphoryl)serine.

It belongs to the acyl carrier protein (ACP) family. Post-translationally, 4'-phosphopantetheine is transferred from CoA to a specific serine of apo-ACP by acpS. This modification is essential for activity because fatty acids are bound in thioester linkage to the sulfhydryl of the prosthetic group.

It is found in the plastid. The protein localises to the chloroplast. Its pathway is lipid metabolism; fatty acid biosynthesis. Carrier of the growing fatty acid chain in fatty acid biosynthesis. The chain is Acyl carrier protein 2, chloroplastic (ACL1.2) from Hordeum vulgare (Barley).